We begin with the raw amino-acid sequence, 294 residues long: Phosphatidylserine decarboxylase proenzyme (294 aa).

Active-site charge relay system; for autoendoproteolytic cleavage activity residues include D100, H157, and S261. Residue S261 is the Schiff-base intermediate with substrate; via pyruvic acid; for decarboxylase activity of the active site. S261 is subject to Pyruvic acid (Ser); by autocatalysis.

Belongs to the phosphatidylserine decarboxylase family. PSD-B subfamily. Prokaryotic type I sub-subfamily. As to quaternary structure, heterodimer of a large membrane-associated beta subunit and a small pyruvoyl-containing alpha subunit. Pyruvate is required as a cofactor. Is synthesized initially as an inactive proenzyme. Formation of the active enzyme involves a self-maturation process in which the active site pyruvoyl group is generated from an internal serine residue via an autocatalytic post-translational modification. Two non-identical subunits are generated from the proenzyme in this reaction, and the pyruvate is formed at the N-terminus of the alpha chain, which is derived from the carboxyl end of the proenzyme. The autoendoproteolytic cleavage occurs by a canonical serine protease mechanism, in which the side chain hydroxyl group of the serine supplies its oxygen atom to form the C-terminus of the beta chain, while the remainder of the serine residue undergoes an oxidative deamination to produce ammonia and the pyruvoyl prosthetic group on the alpha chain. During this reaction, the Ser that is part of the protease active site of the proenzyme becomes the pyruvoyl prosthetic group, which constitutes an essential element of the active site of the mature decarboxylase.

Its subcellular location is the cell membrane. The catalysed reaction is a 1,2-diacyl-sn-glycero-3-phospho-L-serine + H(+) = a 1,2-diacyl-sn-glycero-3-phosphoethanolamine + CO2. It functions in the pathway phospholipid metabolism; phosphatidylethanolamine biosynthesis; phosphatidylethanolamine from CDP-diacylglycerol: step 2/2. Its function is as follows. Catalyzes the formation of phosphatidylethanolamine (PtdEtn) from phosphatidylserine (PtdSer). The sequence is that of Phosphatidylserine decarboxylase proenzyme from Histophilus somni (strain 2336) (Haemophilus somnus).